The sequence spans 157 residues: Protein Smg homolog (157 aa).

Belongs to the Smg family.

The polypeptide is Protein Smg homolog (Tolumonas auensis (strain DSM 9187 / NBRC 110442 / TA 4)).